We begin with the raw amino-acid sequence, 401 residues long: L-rhamnonate dehydratase (401 aa).

Substrate contacts are provided by H29 and R55. Positions 222, 248, and 276 each coordinate Mg(2+). H325 acts as the Proton acceptor in catalysis. E345 provides a ligand contact to substrate.

Belongs to the mandelate racemase/muconate lactonizing enzyme family. RhamD subfamily. As to quaternary structure, homooctamer; tetramer of dimers. It depends on Mg(2+) as a cofactor.

The enzyme catalyses L-rhamnonate = 2-dehydro-3-deoxy-L-rhamnonate + H2O. Its function is as follows. Catalyzes the dehydration of L-rhamnonate to 2-keto-3-deoxy-L-rhamnonate (KDR). The chain is L-rhamnonate dehydratase from Escherichia coli O157:H7.